We begin with the raw amino-acid sequence, 291 residues long: Transmembrane protein 41B (291 aa).

Residues 1–38 are disordered; that stretch reads MAKGRVAERSQMGADHTTPVGDGAAGTRGPAAPGSRDY. Phosphothreonine is present on Thr18. Positions 21–34 are enriched in low complexity; that stretch reads GDGAAGTRGPAAPG. At Ser35 the chain carries Phosphoserine. 6 consecutive transmembrane segments (helical) span residues 52–72, 109–129, 147–169, 197–217, 225–245, and 262–282; these read MSLL…FLVY, FYVQ…TFAI, LALF…LSYL, LINY…FINI, PLKV…FVAI, and SWNS…PAIF. Residues 140–251 are VTT domain; required for its function in autophagy; that stretch reads GFLYPFPLAL…FVAIKAGTTL (112 aa).

It belongs to the TMEM41 family. Interacts with VMP1. Interacts with COPA, COPB1, VDAC1 and ERLIN2. Interacts with ATG2A. Interacts with SURF4.

It is found in the endoplasmic reticulum membrane. The protein localises to the endomembrane system. The enzyme catalyses a 1,2-diacyl-sn-glycero-3-phospho-L-serine(in) = a 1,2-diacyl-sn-glycero-3-phospho-L-serine(out). The catalysed reaction is cholesterol(in) = cholesterol(out). It carries out the reaction a 1,2-diacyl-sn-glycero-3-phosphocholine(in) = a 1,2-diacyl-sn-glycero-3-phosphocholine(out). It catalyses the reaction a 1,2-diacyl-sn-glycero-3-phosphoethanolamine(in) = a 1,2-diacyl-sn-glycero-3-phosphoethanolamine(out). Phospholipid scramblase involved in lipid homeostasis and membrane dynamics processes. Has phospholipid scramblase activity toward cholesterol and phosphatidylserine, as well as phosphatidylethanolamine and phosphatidylcholine. Required for autophagosome formation: participates in early stages of autophagosome biogenesis at the endoplasmic reticulum (ER) membrane by reequilibrating the leaflets of the ER as lipids are extracted by ATG2 (ATG2A or ATG2B) to mediate autophagosome assembly. In addition to autophagy, involved in other processes in which phospholipid scramblase activity is required. Required for normal motor neuron development. The protein is Transmembrane protein 41B of Pongo abelii (Sumatran orangutan).